The following is a 290-amino-acid chain: CTP-dependent diacylglycerol kinase 1 (290 aa).

The segment at 1–33 is disordered; it reads MGTEDAIALPNSTLEPRTEAKQRLSSKSHQVSA. At 1 to 77 the chain is on the lumenal side; that stretch reads MGTEDAIALP…FITKHEIPRK (77 aa). Asn11 is a glycosylation site (N-linked (GlcNAc...) asparagine). A compositionally biased stretch (polar residues) spans 23-33; the sequence is RLSSKSHQVSA. Phosphoserine is present on residues Ser44, Ser45, and Ser46. A helical transmembrane segment spans residues 78-95; it reads VFHSSIGFITLYLYTQGI. At 96 to 103 the chain is on the cytoplasmic side; sequence NYKNVLWP. Residues 104 to 124 traverse the membrane as a helical segment; that stretch reads LIYAFIILFILDLIRLNWPFF. The Lumenal segment spans residues 125–140; that stretch reads NMLYCRTVGALMRKKE. The helical transmembrane segment at 141–161 threads the bilayer; it reads IHTYNGVLWYILGLIFSFNFF. Residues 162–163 are Cytoplasmic-facing; it reads SK. A helical membrane pass occupies residues 164 to 184; it reads DVTLISLFLLSWSDTAAATIG. The Lumenal segment spans residues 185-203; the sequence is RKYGHLTPKVARNKSLAGS. An N-linked (GlcNAc...) asparagine glycan is attached at Asn197. The chain crosses the membrane as a helical span at residues 204–224; it reads IAAFTVGVITCWVFYGYFVPA. Residues 225–244 are Cytoplasmic-facing; it reads YSYVNKPGEIQWSPETSRLS. The helical transmembrane segment at 245–265 threads the bilayer; it reads LNMLSLLGGVVAALSEGIDLF. Topologically, residues 266-290 are lumenal; that stretch reads NWDDNFTIPVLSSLFMNAVIKTFKK. An N-linked (GlcNAc...) asparagine glycan is attached at Asn270.

Belongs to the DGK1 family. Ca(2+) is required as a cofactor. The cofactor is Mg(2+). CKII-mediated phosphorylation of Ser-45 and Ser-46 regulates its function in the production of PA.

The protein resides in the endoplasmic reticulum membrane. The protein localises to the nucleus membrane. The catalysed reaction is a 1,2-diacyl-sn-glycerol + CTP = a 1,2-diacyl-sn-glycero-3-phosphate + CDP + H(+). It carries out the reaction 1,2-di-(9Z-octadecenoyl)-sn-glycerol + CTP = 1,2-di-(9Z-octadecenoyl)-sn-glycero-3-phosphate + CDP + H(+). Inhibited by N-ethylmaleimide, dCTP, and sphingoid bases including sphinganine, sphingosine and phytosphingosine. DAG pyrophosphate, cardiolipin, CDP-DAG, and lyso-PA inhibited activity by 23-66%. Also inhibited by Ca(2+) concentrations of more than 1 mM, by addition of EDTA or EGTA at 5 mM, and by 5 mM Mn(2+) and Zn(2+). Stimulated by major membrane phospholipids including phosphatidylcholine, phosphatidylethanolamine, phosphatidylinositol, phosphatidylserine, phosphatidylglycerol, and phosphatidate. Also stimulated to a maximum by addition of TritonX-100 at a concentration of 1 mM, followed by an apparent inhibition of activity at concentrations above 1 mM. Its function is as follows. CTP-dependent diacylglycerol kinase that catalyzes the phosphorylation of diacylglycerol (DAG) to phosphatidate (PA). Controls phosphatidate levels at the nuclear envelope. Counteracts the activity of PA phosphatase PAH1/SMP2, controlling the levels of PA and DAG for the synthesis of triacylglycerol and membrane phospholipids. May be involved in vesicle trafficking between the endoplasmic reticulum and the Golgi apparatus. Required to convert triacylglycerol-derived DAG to PA for phospholipid synthesis during growth resumption from stationary phase in the absence of de novo fatty acid synthesis. Involved in the resistance to nickel chloride and nalidixic acid. The sequence is that of CTP-dependent diacylglycerol kinase 1 (DGK1) from Saccharomyces cerevisiae (strain ATCC 204508 / S288c) (Baker's yeast).